We begin with the raw amino-acid sequence, 385 residues long: MAEQRITPWDVEVVSTDEVPVAIDYDKIINQFGCEKFNQALADRLEKLSGKPAHYFFRRGIVFAHRDFNLLLDEIANNRPFYLYTGRGPSSKTMHIGHTIPFLLCKYMQDAFKIRLVIQITDDEKFLWKSMRLEDAMAYGRENIKDIVALGFDPKLTYIFSNVEASHHFEENILKISKTINLNEAIKVFGFDMSSNIGQVGFPAKEIAPCFSSSFRFIGKGAMCLVPAAVDQDPFFRLARDKAKALGEKKPSSIYVSLLPDLKGVNRKMSASDPNSSIYLDDAQDTIRKKIIAYAYSGGRKTLEEHREKGGDIDVDVPFEYLKYFLDDDQELEKYRSGYIKGEITSKEMKEKCVVVIQEFVSRYQESRKRVTDDDLRAFIDINKF.

The 'HIGH' region signature appears at 89–98 (PSSKTMHIGH). The 'KMSKS' region motif lies at 268 to 272 (KMSAS).

This sequence belongs to the class-I aminoacyl-tRNA synthetase family. Homodimer.

It carries out the reaction tRNA(Trp) + L-tryptophan + ATP = L-tryptophyl-tRNA(Trp) + AMP + diphosphate + H(+). The sequence is that of Tryptophan--tRNA ligase from Encephalitozoon cuniculi (strain GB-M1) (Microsporidian parasite).